Consider the following 238-residue polypeptide: Uridylate kinase (238 aa).

12 to 15 (KLSG) serves as a coordination point for ATP. Gly54 is a binding site for UMP. Residues Gly55 and Arg59 each coordinate ATP. UMP contacts are provided by residues Asp74 and 135–142 (TGNPFFTT). The ATP site is built by Thr162, Tyr168, and Asp171.

The protein belongs to the UMP kinase family. In terms of assembly, homohexamer.

Its subcellular location is the cytoplasm. It catalyses the reaction UMP + ATP = UDP + ADP. Its pathway is pyrimidine metabolism; CTP biosynthesis via de novo pathway; UDP from UMP (UMPK route): step 1/1. With respect to regulation, inhibited by UTP. In terms of biological role, catalyzes the reversible phosphorylation of UMP to UDP. The sequence is that of Uridylate kinase from Azoarcus sp. (strain BH72).